Reading from the N-terminus, the 224-residue chain is MAQKEEAAVATEAASQNGEDLENLDDPEKLKELIELPPFEIVTGERLPANFFKFQFRNVEYSSGRNKTFLCYVVEAQGKGGQVQASRGYLEDEHAAAHAEEAFFNTILPAFDPALRYNVTWYVSSSPCAACADRIIKTLSKTKNLRLLILVGRLFMWEEPEIQAALKKLKEAGCKLRIMKPQDFEYVWQNFVEQEEGESKAFQPWEDIQENFLYYEEKLADILK.

The disordered stretch occupies residues 1–24 (MAQKEEAAVATEAASQNGEDLENL). 2 residues coordinate Zn(2+): E60 and H98. A CMP/dCMP-type deaminase domain is found at 64–169 (GRNKTFLCYV…PEIQAALKKL (106 aa)). The Proton donor role is filled by E100. Residues C128 and C131 each coordinate Zn(2+).

Belongs to the cytidine and deoxycytidylate deaminase family. Homotetramer. Zn(2+) is required as a cofactor. Expressed exclusively in heart and skeletal muscle.

It catalyses the reaction cytidine(6666) in apoB mRNA + H2O + H(+) = uridine(6666) in apoB mRNA + NH4(+). Probable C to U editing enzyme whose physiological substrate is not yet known. Does not display detectable apoB mRNA editing. Has a low intrinsic cytidine deaminase activity. May play a role in the epigenetic regulation of gene expression through the process of active DNA demethylation. This Homo sapiens (Human) protein is C-&gt;U-editing enzyme APOBEC-2 (APOBEC2).